A 159-amino-acid polypeptide reads, in one-letter code: 2-C-methyl-D-erythritol 2,4-cyclodiphosphate synthase (159 aa).

A divalent metal cation-binding residues include Asp10 and His12. 4-CDP-2-C-methyl-D-erythritol 2-phosphate contacts are provided by residues Asp10 to His12 and His36 to Ser37. His44 provides a ligand contact to a divalent metal cation. 4-CDP-2-C-methyl-D-erythritol 2-phosphate contacts are provided by residues Asp58–Gly60, Phe63–Asp67, and Arg144.

The protein belongs to the IspF family. As to quaternary structure, homotrimer. A divalent metal cation serves as cofactor.

It catalyses the reaction 4-CDP-2-C-methyl-D-erythritol 2-phosphate = 2-C-methyl-D-erythritol 2,4-cyclic diphosphate + CMP. Its pathway is isoprenoid biosynthesis; isopentenyl diphosphate biosynthesis via DXP pathway; isopentenyl diphosphate from 1-deoxy-D-xylulose 5-phosphate: step 4/6. Its function is as follows. Involved in the biosynthesis of isopentenyl diphosphate (IPP) and dimethylallyl diphosphate (DMAPP), two major building blocks of isoprenoid compounds. Catalyzes the conversion of 4-diphosphocytidyl-2-C-methyl-D-erythritol 2-phosphate (CDP-ME2P) to 2-C-methyl-D-erythritol 2,4-cyclodiphosphate (ME-CPP) with a corresponding release of cytidine 5-monophosphate (CMP). The sequence is that of 2-C-methyl-D-erythritol 2,4-cyclodiphosphate synthase from Paraburkholderia phytofirmans (strain DSM 17436 / LMG 22146 / PsJN) (Burkholderia phytofirmans).